A 156-amino-acid chain; its full sequence is 6,7-dimethyl-8-ribityllumazine synthase (156 aa).

Residues Phe-22, 57–59 (AYE), and 81–83 (TVI) each bind 5-amino-6-(D-ribitylamino)uracil. A (2S)-2-hydroxy-3-oxobutyl phosphate-binding site is contributed by 86–87 (GT). Residue His-89 is the Proton donor of the active site. Position 114 (Phe-114) interacts with 5-amino-6-(D-ribitylamino)uracil. Arg-128 is a binding site for (2S)-2-hydroxy-3-oxobutyl phosphate.

The protein belongs to the DMRL synthase family. As to quaternary structure, forms an icosahedral capsid composed of 60 subunits, arranged as a dodecamer of pentamers.

It catalyses the reaction (2S)-2-hydroxy-3-oxobutyl phosphate + 5-amino-6-(D-ribitylamino)uracil = 6,7-dimethyl-8-(1-D-ribityl)lumazine + phosphate + 2 H2O + H(+). Its pathway is cofactor biosynthesis; riboflavin biosynthesis; riboflavin from 2-hydroxy-3-oxobutyl phosphate and 5-amino-6-(D-ribitylamino)uracil: step 1/2. Catalyzes the formation of 6,7-dimethyl-8-ribityllumazine by condensation of 5-amino-6-(D-ribitylamino)uracil with 3,4-dihydroxy-2-butanone 4-phosphate. This is the penultimate step in the biosynthesis of riboflavin. The protein is 6,7-dimethyl-8-ribityllumazine synthase of Mannheimia succiniciproducens (strain KCTC 0769BP / MBEL55E).